A 112-amino-acid polypeptide reads, in one-letter code: Large ribosomal subunit protein eL30 (112 aa).

Belongs to the eukaryotic ribosomal protein eL30 family.

The chain is Large ribosomal subunit protein eL30 (RPL30) from Zea mays (Maize).